The following is a 306-amino-acid chain: Homeobox protein Hox-C13a (306 aa).

Residues 236–295 (GRKKRVPYTKIQLKELEKEYAASKFITKDKRRRISATTNLSERQVTIWFQNRRVKEKKFV) constitute a DNA-binding region (homeobox).

The protein belongs to the Abd-B homeobox family.

The protein resides in the nucleus. Functionally, sequence-specific transcription factor which is part of a developmental regulatory system that provides cells with specific positional identities on the anterior-posterior axis. This chain is Homeobox protein Hox-C13a (hoxc13a), found in Danio rerio (Zebrafish).